A 295-amino-acid chain; its full sequence is Bifunctional protein FolD (295 aa).

NADP(+) is bound by residues 166-168, Ser-191, and Ile-232; that span reads GRS.

This sequence belongs to the tetrahydrofolate dehydrogenase/cyclohydrolase family. Homodimer.

The enzyme catalyses (6R)-5,10-methylene-5,6,7,8-tetrahydrofolate + NADP(+) = (6R)-5,10-methenyltetrahydrofolate + NADPH. It carries out the reaction (6R)-5,10-methenyltetrahydrofolate + H2O = (6R)-10-formyltetrahydrofolate + H(+). It participates in one-carbon metabolism; tetrahydrofolate interconversion. In terms of biological role, catalyzes the oxidation of 5,10-methylenetetrahydrofolate to 5,10-methenyltetrahydrofolate and then the hydrolysis of 5,10-methenyltetrahydrofolate to 10-formyltetrahydrofolate. This chain is Bifunctional protein FolD, found in Rhodopseudomonas palustris (strain BisB5).